The primary structure comprises 440 residues: FAD-dependent monooxygenase FVEG_08293 (440 aa).

The helical transmembrane segment at 7 to 26 threads the bilayer; sequence EFNVAIVGAGVAGLALAMAL. FAD contacts are provided by E37 and G50. Residue N77 is glycosylated (N-linked (GlcNAc...) asparagine). An FAD-binding site is contributed by R122. Residues R203 and Y235 contribute to the active site. FAD contacts are provided by D317 and A330.

The protein belongs to the paxM FAD-dependent monooxygenase family. FAD is required as a cofactor.

The protein localises to the membrane. FAD-dependent monooxygenase; part of the Fusarium detoxification of benzoxazolinone cluster 1 (FDB1) involved in the degradation of benzoxazolinones produced by the host plant. Maize, wheat, and rye produce the 2 benzoxazinone phytoanticipins 2,4-dihy-droxy-7-methoxy-1,4-benzoxazin-3-one (DIMBOA) and 2,4-dihydroxy-1,4-benzoxazin-3-one (DIBOA) that, due to their inherent instability once released, spontaneously degrade to the more stable corresponding benzoxazolinones, 6-methoxy-2-benzoxazolinone (MBOA) and 2-benzoxazolinone (BOA), respectively. The first step in the detoxification of benzoxazolinones involves the hydrolysis of the cyclic ester bond of benzoxazolinones by the FDB1 cluster gamma-lactamase MBL1 to aminophenols. MBL1 is able to convert BOA into 2-aminophenol (2-AP), as well as MBOA into 5-methoxy-2-aminophenol (2-AMP). The FDB2 cluster N-malonyltransferase FDB2/NAT1 then metabolizes aminophenols via N-malonylation to non-toxic malonamic acids. FDB2/NAT1 converts 2-AP into N-(2-hydroxyphenyl) malonamic acid (HPMA) and 2-AMP into N-(2-hydroxy-4-methoxyphenyl) malonamic acid (HMPMA). The duplicated dienlactone hydrolases DLH1 and DLH2 may provide redundant function for hydrolyzing the lactone moiety in the BOA molecule. The roles of the amidases an other enzymes encoded by the 2 FDB clusters have not been identified so far. The sequence is that of FAD-dependent monooxygenase FVEG_08293 from Gibberella moniliformis (strain M3125 / FGSC 7600) (Maize ear and stalk rot fungus).